Reading from the N-terminus, the 478-residue chain is MSPQTETKASVGFKAGVKDYKLTYYTPEYETKDTDILAAFRVTPQPGVPPEEAGAAVAAESSTGTWTTVWTDGLTSLDRYKGRCYHIEPVPGEEDQYICYVAYPLDLFEEGSVTNMFTSIVGNVFGFKALRALRLEDLRIPPTYSKTFQGPPHGIQVERDKLNKYGRPLLGCTIKPKLGLSAKNYGRACYECLRGGLDFTKDDENVNSQPFMRWRDRFVFCAEAIYKAQAETGEIKGHYLNATAGTCEEMMKRAAFARELGVPIVMHDYLTGGFTANTSLSMYCRDNGLLLHIHRAMHAVIDRQKNHGIHFRVLAKALRMSGGDHVHSGTVVGKLEGEREITLGFVDLLRDDFIEKDRSRGVFFTQDWVSMPGVIPVASGGIHVWHMPALTEIFGDDSVLQFGGGTLGHPWGNAPGAVANRVALEACVQARNEGRDLAREGNEIIKAACKWSPELAAACEVWKAIKFEFEPVDTVDKV.

A propeptide spanning residues 1-2 (MS) is cleaved from the precursor. N-acetylproline is present on proline 3. Lysine 14 is subject to N6,N6,N6-trimethyllysine. Residues asparagine 123 and threonine 173 each contribute to the substrate site. Residue lysine 175 is the Proton acceptor of the active site. Lysine 177 contributes to the substrate binding site. Mg(2+)-binding residues include lysine 201, aspartate 203, and glutamate 204. Position 201 is an N6-carboxylysine (lysine 201). Histidine 294 functions as the Proton acceptor in the catalytic mechanism. The substrate site is built by arginine 295, histidine 327, and serine 379.

It belongs to the RuBisCO large chain family. Type I subfamily. As to quaternary structure, heterohexadecamer of 8 large chains and 8 small chains; disulfide-linked. The disulfide link is formed within the large subunit homodimers. Mg(2+) is required as a cofactor. In terms of processing, the disulfide bond which can form in the large chain dimeric partners within the hexadecamer appears to be associated with oxidative stress and protein turnover.

It localises to the plastid. Its subcellular location is the chloroplast. The enzyme catalyses 2 (2R)-3-phosphoglycerate + 2 H(+) = D-ribulose 1,5-bisphosphate + CO2 + H2O. The catalysed reaction is D-ribulose 1,5-bisphosphate + O2 = 2-phosphoglycolate + (2R)-3-phosphoglycerate + 2 H(+). RuBisCO catalyzes two reactions: the carboxylation of D-ribulose 1,5-bisphosphate, the primary event in carbon dioxide fixation, as well as the oxidative fragmentation of the pentose substrate in the photorespiration process. Both reactions occur simultaneously and in competition at the same active site. This chain is Ribulose bisphosphate carboxylase large chain, found in Neurachne munroi.